A 324-amino-acid polypeptide reads, in one-letter code: NADH-ubiquinone oxidoreductase chain 1 (324 aa).

The next 9 helical transmembrane spans lie at isoleucine 9–leucine 29, proline 43–isoleucine 63, isoleucine 75–leucine 95, leucine 106–glycine 126, isoleucine 146–phenylalanine 166, serine 177–alanine 197, leucine 228–glycine 250, glutamate 259–valine 279, and phenylalanine 299–glycine 319.

Belongs to the complex I subunit 1 family.

It is found in the mitochondrion inner membrane. The catalysed reaction is a ubiquinone + NADH + 5 H(+)(in) = a ubiquinol + NAD(+) + 4 H(+)(out). Its function is as follows. Core subunit of the mitochondrial membrane respiratory chain NADH dehydrogenase (Complex I) that is believed to belong to the minimal assembly required for catalysis. Complex I functions in the transfer of electrons from NADH to the respiratory chain. The immediate electron acceptor for the enzyme is believed to be ubiquinone. This chain is NADH-ubiquinone oxidoreductase chain 1 (MT-ND1), found in Tetraodon nigroviridis (Spotted green pufferfish).